The chain runs to 626 residues: Chaperone protein HtpG (626 aa).

Positions 1–341 are a; substrate-binding; it reads METKQFKAES…SEDLSLNISR (341 aa). The segment at 342–552 is b; it reads EILQHDRQLK…EGELSIEMEK (211 aa). Residues 490 to 509 are disordered; it reads DLGIEGEEKENTSSSDDKEN. Residues 498 to 509 are compositionally biased toward basic and acidic residues; it reads KENTSSSDDKEN. Residues 553-626 are c; that stretch reads VLNAMPNNQN…FTNNICKIMK (74 aa).

It belongs to the heat shock protein 90 family. Homodimer.

The protein localises to the cytoplasm. Functionally, molecular chaperone. Has ATPase activity. This chain is Chaperone protein HtpG, found in Clostridium botulinum (strain Loch Maree / Type A3).